The chain runs to 417 residues: NADH-quinone oxidoreductase subunit D (417 aa).

This sequence belongs to the complex I 49 kDa subunit family. In terms of assembly, NDH-1 is composed of 14 different subunits. Subunits NuoB, C, D, E, F, and G constitute the peripheral sector of the complex.

The protein localises to the cell inner membrane. The catalysed reaction is a quinone + NADH + 5 H(+)(in) = a quinol + NAD(+) + 4 H(+)(out). In terms of biological role, NDH-1 shuttles electrons from NADH, via FMN and iron-sulfur (Fe-S) centers, to quinones in the respiratory chain. The immediate electron acceptor for the enzyme in this species is believed to be ubiquinone. Couples the redox reaction to proton translocation (for every two electrons transferred, four hydrogen ions are translocated across the cytoplasmic membrane), and thus conserves the redox energy in a proton gradient. This chain is NADH-quinone oxidoreductase subunit D, found in Coxiella burnetii (strain CbuG_Q212) (Coxiella burnetii (strain Q212)).